The primary structure comprises 440 residues: Thymidine phosphorylase (440 aa).

The protein belongs to the thymidine/pyrimidine-nucleoside phosphorylase family. Homodimer.

It catalyses the reaction thymidine + phosphate = 2-deoxy-alpha-D-ribose 1-phosphate + thymine. It participates in pyrimidine metabolism; dTMP biosynthesis via salvage pathway; dTMP from thymine: step 1/2. Its function is as follows. The enzymes which catalyze the reversible phosphorolysis of pyrimidine nucleosides are involved in the degradation of these compounds and in their utilization as carbon and energy sources, or in the rescue of pyrimidine bases for nucleotide synthesis. This chain is Thymidine phosphorylase, found in Yersinia enterocolitica serotype O:8 / biotype 1B (strain NCTC 13174 / 8081).